We begin with the raw amino-acid sequence, 350 residues long: Phenylalanine--tRNA ligase alpha subunit (350 aa).

Glutamate 271 is a binding site for Mg(2+).

This sequence belongs to the class-II aminoacyl-tRNA synthetase family. Phe-tRNA synthetase alpha subunit type 1 subfamily. Tetramer of two alpha and two beta subunits. It depends on Mg(2+) as a cofactor.

It localises to the cytoplasm. The enzyme catalyses tRNA(Phe) + L-phenylalanine + ATP = L-phenylalanyl-tRNA(Phe) + AMP + diphosphate + H(+). The polypeptide is Phenylalanine--tRNA ligase alpha subunit (Paracidovorax citrulli (strain AAC00-1) (Acidovorax citrulli)).